A 311-amino-acid chain; its full sequence is MAKSRVLIVGGTGYLGRRMVKACLDQGHTTYVLHRQEVGVDIDKIQMLLSFKEQGAHLVEGSFNDHRSLVEAVKLVDVVICTISGVHIRSHQILLQLKLVEAIEEAGNVKRFLPSEFGMDPARMAHAMEPGRATFDEKMVVRKAIEDAKIPHTYASANCFAGYFLGGLCQFGKIIPSKESVILSGDGNVKGIYVDEYDIATYTIKTMDDPRTLNKTIYIRPPANILSQREVVEIWEKLIGKVLDKSSLSEEDFLALMKGLSHGHQAGLTHYYHVSYEGCLTNFEVEDGVDASKLYPQVNYTTVSEYLKRYL.

NADP(+) is bound by residues Gly-10 to Gly-16, Arg-35, and Lys-44. Lys-138 acts as the Proton acceptor in catalysis. NADP(+) is bound at residue Arg-142. His-270 is a substrate binding site.

This sequence belongs to the NmrA-type oxidoreductase family. Isoflavone reductase subfamily. Dimer. As to expression, expressed in rhizomes, stems, and leaves.

The enzyme catalyses (-)-secoisolariciresinol + NADP(+) = (+)-lariciresinol + NADPH + H(+). It catalyses the reaction (+)-lariciresinol + NADP(+) = (+)-pinoresinol + NADPH + H(+). The protein operates within aromatic compound metabolism; phenylpropanoid biosynthesis. Functionally, reductase involved in lignan biosynthesis. Also involved in the biosynthesis of etoposide, a chemotherapeutic compound of the topoisomerase inhibitor family. Catalyzes the enantioselective sequential conversion of (+)-pinoresinol into (+)-lariciresinol and of (+)-lariciresinol into (-)-secoisolariciresinol. Abstracts the 4R-hydride from the NADPH cofactor during catalysis. The chain is Bifunctional pinoresinol-lariciresinol reductase from Sinopodophyllum hexandrum (Himalayan may apple).